Consider the following 314-residue polypeptide: CBASS oligonucleotide cyclase CdnC (314 aa).

ATP is bound at residue Lys60. 2 residues coordinate Mg(2+): Asp73 and Asp75. Residues Asp75, Lys186, 197-199 (KSF), and Asn263 each bind ATP.

It belongs to the CD-NTase family. C01 subfamily. In terms of assembly, forms complexes with Cap7 with 1:1 and 2:2 stoichimetry, and a 1:1:6 CdnC:Cap7:Cap6 complex. Requires Mg(2+) as cofactor.

In terms of biological role, cyclic nucleotide synthase (second messenger synthase) of a CBASS antivirus system. CBASS (cyclic oligonucleotide-based antiphage signaling system) provides immunity against bacteriophage. The CD-NTase protein synthesizes cyclic nucleotides in response to infection; these serve as specific second messenger signals. The signals activate a diverse range of effectors, leading to bacterial cell death and thus abortive phage infection. A type III CBASS system. Expression of this CBASS system (Cap18-Cap6-Cap7-CdnC-CapW-Cap17) in a susceptible E.coli (strain MG1655) confers resistance to bacteriophage P1. Probable cyclic nucleotide synthase that upon activation catalyzes the synthesis of a cyclic nucleotide. A cyclase activity for this enzyme was not identified in. This chain is CBASS oligonucleotide cyclase CdnC, found in Escherichia coli (strain KTE188).